Reading from the N-terminus, the 1034-residue chain is Beta-galactosidase (1034 aa).

Residues asparagine 108 and aspartate 207 each coordinate substrate. Aspartate 207 contributes to the Na(+) binding site. Residues glutamate 423, histidine 425, and glutamate 468 each coordinate Mg(2+). Substrate is bound by residues glutamate 468 and 544–547 (EYAH). Glutamate 468 acts as the Proton donor in catalysis. Glutamate 544 acts as the Nucleophile in catalysis. Asparagine 604 provides a ligand contact to Mg(2+). Phenylalanine 608 and asparagine 611 together coordinate Na(+). Substrate-binding residues include asparagine 611 and tryptophan 1010.

This sequence belongs to the glycosyl hydrolase 2 family. As to quaternary structure, homotetramer. It depends on Mg(2+) as a cofactor. The cofactor is Na(+).

It catalyses the reaction Hydrolysis of terminal non-reducing beta-D-galactose residues in beta-D-galactosides.. This Klebsiella pneumoniae protein is Beta-galactosidase.